The following is a 417-amino-acid chain: Zinc-finger homeodomain protein 4 (417 aa).

The span at methionine 1–glutamate 12 shows a compositional bias: polar residues. Disordered regions lie at residues methionine 1–alanine 22 and arginine 31–arginine 50. Over residues alanine 13–alanine 22 the composition is skewed to low complexity. Acidic residues predominate over residues glutamine 36–glutamate 46. The segment at tyrosine 145–glutamate 194 adopts a ZF-HD dimerization-type; degenerate zinc-finger fold. Disordered regions lie at residues aspartate 281 to lysine 309 and asparagine 361 to glutamate 417. The segment covering serine 286–serine 298 has biased composition (gly residues). Positions lysine 303 to proline 366 form a DNA-binding region, homeobox. Positions proline 368 to glutamate 417 are enriched in pro residues.

In terms of assembly, homo- and heterodimer with other ZFHD proteins.

It is found in the nucleus. Its function is as follows. Putative transcription factor. The polypeptide is Zinc-finger homeodomain protein 4 (ZHD4) (Oryza sativa subsp. japonica (Rice)).